The sequence spans 472 residues: Ribulose bisphosphate carboxylase large chain (472 aa).

Substrate contacts are provided by asparagine 120 and threonine 170. Lysine 172 serves as the catalytic Proton acceptor. Lysine 174 contacts substrate. Residues lysine 198, aspartate 200, and glutamate 201 each contribute to the Mg(2+) site. The residue at position 198 (lysine 198) is an N6-carboxylysine. Histidine 291 acts as the Proton acceptor in catalysis. Substrate is bound by residues arginine 292, histidine 324, and serine 376. The short motif at 461–467 is the Interacts with RbcX2 element; it reads EIKFEFE.

It belongs to the RuBisCO large chain family. Type I subfamily. Heterohexadecamer of 8 large chains and 8 small chains; disulfide-linked. The disulfide link is formed within the large subunit homodimers. The exposed C-terminus binds in a cleft in the RbcX2 (shown with endogenous and Anabaena strain CA protein). RbcX2 is displaced by RbcS; as RbcX2 is removed RbcS mediates the ordering of an internal RbcL loop (Thr-64-Leu-70) in a catalytically active conformation. It depends on Mg(2+) as a cofactor. The disulfide bond which can form in the large chain dimeric partners within the hexadecamer appears to be associated with oxidative stress and protein turnover.

The protein localises to the carboxysome. The catalysed reaction is 2 (2R)-3-phosphoglycerate + 2 H(+) = D-ribulose 1,5-bisphosphate + CO2 + H2O. It carries out the reaction D-ribulose 1,5-bisphosphate + O2 = 2-phosphoglycolate + (2R)-3-phosphoglycerate + 2 H(+). Functionally, ruBisCO catalyzes two reactions: the carboxylation of D-ribulose 1,5-bisphosphate, the primary event in carbon dioxide fixation, as well as the oxidative fragmentation of the pentose substrate in the photorespiration process. Both reactions occur simultaneously and in competition at the same active site. The sequence is that of Ribulose bisphosphate carboxylase large chain (cbbL) from Synechococcus sp. (strain ATCC 27144 / PCC 6301 / SAUG 1402/1) (Anacystis nidulans).